The chain runs to 602 residues: Elongation factor 4 (602 aa).

Positions 6–188 constitute a tr-type G domain; that stretch reads DHIRNFSIVA…AIVNKLPAPK (183 aa). Residues 18–23 and 135–138 contribute to the GTP site; these read DHGKST and NKID.

Belongs to the TRAFAC class translation factor GTPase superfamily. Classic translation factor GTPase family. LepA subfamily.

It localises to the cell inner membrane. The enzyme catalyses GTP + H2O = GDP + phosphate + H(+). Functionally, required for accurate and efficient protein synthesis under certain stress conditions. May act as a fidelity factor of the translation reaction, by catalyzing a one-codon backward translocation of tRNAs on improperly translocated ribosomes. Back-translocation proceeds from a post-translocation (POST) complex to a pre-translocation (PRE) complex, thus giving elongation factor G a second chance to translocate the tRNAs correctly. Binds to ribosomes in a GTP-dependent manner. The chain is Elongation factor 4 from Brucella abortus (strain 2308).